Consider the following 226-residue polypeptide: Cytidylate kinase (226 aa).

10–18 (GPASSGKST) provides a ligand contact to ATP.

The protein belongs to the cytidylate kinase family. Type 1 subfamily.

The protein resides in the cytoplasm. It catalyses the reaction CMP + ATP = CDP + ADP. The enzyme catalyses dCMP + ATP = dCDP + ADP. This chain is Cytidylate kinase, found in Enterococcus faecalis (strain ATCC 700802 / V583).